The chain runs to 279 residues: Probable endonuclease 4 (279 aa).

Residues His66, His106, Glu142, Asp176, His179, His213, Asp226, His228, and Glu258 each contribute to the Zn(2+) site.

Belongs to the AP endonuclease 2 family. Zn(2+) is required as a cofactor.

The catalysed reaction is Endonucleolytic cleavage to 5'-phosphooligonucleotide end-products.. Its function is as follows. Endonuclease IV plays a role in DNA repair. It cleaves phosphodiester bonds at apurinic or apyrimidinic (AP) sites, generating a 3'-hydroxyl group and a 5'-terminal sugar phosphate. The sequence is that of Probable endonuclease 4 from Photobacterium profundum (strain SS9).